We begin with the raw amino-acid sequence, 131 residues long: Profilin (131 aa).

It belongs to the profilin family. Occurs in many kinds of cells as a complex with monomeric actin in a 1:1 ratio.

It is found in the cytoplasm. The protein localises to the cytoskeleton. Its function is as follows. Binds to actin and affects the structure of the cytoskeleton. At high concentrations, profilin prevents the polymerization of actin, whereas it enhances it at low concentrations. Has a high affinity for poly-proline. The sequence is that of Profilin from Citrullus lanatus (Watermelon).